The following is a 166-amino-acid chain: PTS system glucose-specific EIIA component (166 aa).

The 105-residue stretch at 36-140 (DVVFSEKIVG…SVLTPIVISN (105 aa)) folds into the PTS EIIA type-1 domain. The Zn(2+) site is built by H73 and H88. H88 acts as the Tele-phosphohistidine intermediate; for EIIA activity in catalysis. H88 is modified (phosphohistidine; by HPr).

Heterodimer with glycerol kinase (glpk). Zn(2+) serves as cofactor.

It localises to the cytoplasm. Its function is as follows. The phosphoenolpyruvate-dependent sugar phosphotransferase system (sugar PTS), a major carbohydrate active transport system, catalyzes the phosphorylation of incoming sugar substrates concomitantly with their translocation across the cell membrane. The enzyme II complex composed of PtsG and Crr is involved in glucose transport. In Haemophilus influenzae (strain ATCC 51907 / DSM 11121 / KW20 / Rd), this protein is PTS system glucose-specific EIIA component (crr).